A 1061-amino-acid chain; its full sequence is DNA primase TraC (1061 aa).

The region spanning 850–938 is the Toprim domain; sequence PALVIGEGYA…GKAIFPIFAP (89 aa). The interval 1034-1061 is disordered; that stretch reads EGQRQKVQQLKQQDIEQQEQRQRRARTY.

In terms of biological role, required for autonomous replication in E.coli. Transferred into the recipient cell during bacterial conjugation. Catalyzes the synthesis of short oligoribonucleotide primers with CpA or pCpA at their 5'-termini on a single-stranded template DNA. The sequence is that of DNA primase TraC (traC) from Escherichia coli.